We begin with the raw amino-acid sequence, 419 residues long: 2-amino-3-ketobutyrate coenzyme A ligase, mitochondrial (419 aa).

The N-terminal 21 residues, 1–21 (MWPGNAWRAALFWVPRGRRAQ), are a transit peptide targeting the mitochondrion. K45 bears the N6-acetyllysine; alternate mark. K45 carries the N6-succinyllysine; alternate modification. 134–135 (CY) serves as a coordination point for pyridoxal 5'-phosphate. H159 is a binding site for substrate. K187 is modified (N6-acetyllysine; alternate). K187 is modified (N6-succinyllysine; alternate). Pyridoxal 5'-phosphate-binding positions include S206, 262–265 (TLGK), and 295–296 (SN). Position 265 is an N6-(pyridoxal phosphate)lysine (K265). N6-succinyllysine is present on residues K326 and K368. N6-acetyllysine; alternate is present on K383. The residue at position 383 (K383) is an N6-succinyllysine; alternate. Substrate is bound at residue R389.

It belongs to the class-II pyridoxal-phosphate-dependent aminotransferase family. Pyridoxal 5'-phosphate is required as a cofactor. Strongly expressed in heart, brain, liver and pancreas. Also found in lung.

Its subcellular location is the mitochondrion. It is found in the nucleus. The catalysed reaction is glycine + acetyl-CoA = (2S)-2-amino-3-oxobutanoate + CoA. Pyridoxal phosphate (PLP) dependent enzyme, which catalyzes the cleavage of 2-amino-3-oxobutanoate to glycine and acetyl-CoA. This is 2-amino-3-ketobutyrate coenzyme A ligase, mitochondrial from Homo sapiens (Human).